We begin with the raw amino-acid sequence, 428 residues long: Phosphomethylpyrimidine synthase 1 (428 aa).

Substrate contacts are provided by residues methionine 94, tyrosine 123, histidine 162, 184-186 (SRG), 225-228 (NGMR), and glutamate 264. Histidine 268 provides a ligand contact to Zn(2+). Residue tyrosine 291 participates in substrate binding. Residue histidine 332 participates in Zn(2+) binding. [4Fe-4S] cluster is bound by residues cysteine 408, cysteine 411, and cysteine 415.

The protein belongs to the ThiC family. [4Fe-4S] cluster is required as a cofactor.

It carries out the reaction 5-amino-1-(5-phospho-beta-D-ribosyl)imidazole + S-adenosyl-L-methionine = 4-amino-2-methyl-5-(phosphooxymethyl)pyrimidine + CO + 5'-deoxyadenosine + formate + L-methionine + 3 H(+). The protein operates within cofactor biosynthesis; thiamine diphosphate biosynthesis. Catalyzes the synthesis of the hydroxymethylpyrimidine phosphate (HMP-P) moiety of thiamine from aminoimidazole ribotide (AIR) in a radical S-adenosyl-L-methionine (SAM)-dependent reaction. This chain is Phosphomethylpyrimidine synthase 1, found in Methanosarcina barkeri (strain Fusaro / DSM 804).